Reading from the N-terminus, the 81-residue chain is Photosystem I iron-sulfur center (81 aa).

4Fe-4S ferredoxin-type domains follow at residues 2-31 (SHTV…MVPW) and 39-68 (IASA…VRVY). 8 residues coordinate [4Fe-4S] cluster: C11, C14, C17, C21, C48, C51, C54, and C58.

As to quaternary structure, the eukaryotic PSI reaction center is composed of at least 11 subunits. Requires [4Fe-4S] cluster as cofactor.

The protein localises to the plastid. Its subcellular location is the chloroplast thylakoid membrane. It carries out the reaction reduced [plastocyanin] + hnu + oxidized [2Fe-2S]-[ferredoxin] = oxidized [plastocyanin] + reduced [2Fe-2S]-[ferredoxin]. In terms of biological role, apoprotein for the two 4Fe-4S centers FA and FB of photosystem I (PSI); essential for photochemical activity. FB is the terminal electron acceptor of PSI, donating electrons to ferredoxin. The C-terminus interacts with PsaA/B/D and helps assemble the protein into the PSI complex. Required for binding of PsaD and PsaE to PSI. PSI is a plastocyanin/cytochrome c6-ferredoxin oxidoreductase, converting photonic excitation into a charge separation, which transfers an electron from the donor P700 chlorophyll pair to the spectroscopically characterized acceptors A0, A1, FX, FA and FB in turn. This chain is Photosystem I iron-sulfur center, found in Chlorella vulgaris (Green alga).